The following is a 158-amino-acid chain: Glycine/sarcosine/betaine reductase complex component A1 (158 aa).

Sec-46 is a catalytic residue. Position 46 (Sec-46) is a non-standard amino acid, selenocysteine.

Belongs to the GrdA family. As to quaternary structure, monomer. Component of the glycine, sarcosine and betaine reductase complexes, together with components B and C.

It carries out the reaction acetyl phosphate + [thioredoxin]-disulfide + NH4(+) + H2O = [thioredoxin]-dithiol + glycine + phosphate + H(+). The catalysed reaction is acetyl phosphate + methylamine + [thioredoxin]-disulfide + H2O = sarcosine + [thioredoxin]-dithiol + phosphate + H(+). It catalyses the reaction acetyl phosphate + trimethylamine + [thioredoxin]-disulfide + H2O = glycine betaine + [thioredoxin]-dithiol + phosphate + H(+). In terms of biological role, in the first step of glycine, betaine and sarcosine reductases, the substrate is bound to component PB via a Schiff base intermediate. Then the PB-activated substrate is nucleophilically attacked by the selenol anion of component PA to transform it to a carboxymethylated selenoether and the respective amine. By action of component PC, acetyl phosphate is formed, leaving component PA in its oxidized state. Finally component PA becomes reduced by the thioredoxin system to start a new catalytic cycle of reductive deamination. This is Glycine/sarcosine/betaine reductase complex component A1 (grdA1) from Photobacterium profundum (strain SS9).